A 229-amino-acid polypeptide reads, in one-letter code: uncharacterized protein (229 aa).

Positions 24 to 78 (LRKWRSIFNASQSDLARKLGISPSVISDYESGRRKPGTAFLKKFVCALIELDGER) constitute an HTH cro/C1-type domain. The H-T-H motif DNA-binding region spans 35–54 (QSDLARKLGISPSVISDYES).

This is an uncharacterized protein from Archaeoglobus fulgidus (strain ATCC 49558 / DSM 4304 / JCM 9628 / NBRC 100126 / VC-16).